Here is a 448-residue protein sequence, read N- to C-terminus: MHIVVVGLNNKTAPVAIREQFSFGEQEIVDAMIALREEKSIFESVILSTCNRTELYVVTDQLHTGRYYTKRFLANWFNLEMEQFTPYLSIREGEEAIRHLFRVTSGLDSMIIGETQILGQVKTSFFRAQEHGTTGTVFNKLFKEAVTLAKRAHTDTQIGEMSVSVSSAAVTLAQEMYQQLEDKQVVVVGAGETGELTTLNLFEAGAKQIAVFNRTESKAKAVADKFKGRAHSIREIACGLLDADILISSTGAKEAVIGYDDVAAAQLLRRERPLLLIDIAVPRDIDPAVATLPGVHLFDVDDLNGIVNKNLEARLVEAEKIEMKIDEAIQEFQTWLVTLGVVPIMNELRARALDIQEDTMTSLERKLDHLSARDKKVIGKHMKSIINQMLRDPIDYIKDAAAQPDANVRIAQFIETFGLDVELPEQPVDEVEETDATSAKAPLRALMR.

Residues 49-52 (TCNR), Ser-109, 114-116 (ETQ), and Gln-120 contribute to the substrate site. The Nucleophile role is filled by Cys-50. 189–194 (GAGETG) is a binding site for NADP(+). The segment at 427–448 (PVDEVEETDATSAKAPLRALMR) is disordered.

It belongs to the glutamyl-tRNA reductase family. As to quaternary structure, homodimer.

The enzyme catalyses (S)-4-amino-5-oxopentanoate + tRNA(Glu) + NADP(+) = L-glutamyl-tRNA(Glu) + NADPH + H(+). The protein operates within porphyrin-containing compound metabolism; protoporphyrin-IX biosynthesis; 5-aminolevulinate from L-glutamyl-tRNA(Glu): step 1/2. In terms of biological role, catalyzes the NADPH-dependent reduction of glutamyl-tRNA(Glu) to glutamate 1-semialdehyde (GSA). The protein is Glutamyl-tRNA reductase of Exiguobacterium sp. (strain ATCC BAA-1283 / AT1b).